We begin with the raw amino-acid sequence, 392 residues long: Neutrophil cytosol factor 1 (392 aa).

Positions 4–125 (HFIRHIALLG…NFFKVRPDDL (122 aa)) constitute a PX domain. SH3 domains follow at residues 156–215 (IILQ…PLDS) and 226–285 (YAGE…KAGQ). The disordered stretch occupies residues 290–392 (AKSQIKSRGA…STKRKLASAV (103 aa)). A phosphoserine mark is found at serine 304 and serine 305. The span at 310-319 (HSIHQRSRKR) shows a compositional bias: basic residues. Phosphoserine occurs at positions 321, 329, and 348. The segment covering 376 to 385 (ILHRCSESTK) has biased composition (basic and acidic residues).

In terms of assembly, component of the phagocyte NADPH oxidase complex composed of an obligatory core heterodimer formed by the membrane proteins CYBA and CYBB and the cytosolic regulatory subunits NCF1/p47-phox, NCF2/p67-phox, NCF4/p40-phox and the small GTPase RAC1 or RAC2. Part of a cytosolic complex composed at least by NCF1, NCF2 and NCF4. Interacts (via C-terminus) with NCF2 (via the C-terminal SH3 domain). Interacts with NCF4. Interacts with CYBB. Interacts (via the second SH3 domain) with CYBA; interaction is phosphorylation-dependent. Interacts with NOXA1. Interacts with ADAM15. Interacts with TRAF4. Interacts with FASLG. Interacts with PARK7 (via C-terminus); the interaction is enhanced by LPS and modulates NCF1 phosphorylation and membrane translocation. Phosphorylated by PRKCD; phosphorylation induces activation of NCF1, leading to assembly and activation of the NADPH oxidase complex.

It localises to the cytoplasm. It is found in the cytosol. The protein localises to the membrane. Its function is as follows. Subunit of the phagocyte NADPH oxidase complex that mediates the transfer of electrons from cytosolic NADPH to O2 to produce the superoxide anion (O2(-)). In the activated complex, electrons are first transferred from NADPH to flavin adenine dinucleotide (FAD) and subsequently transferred via two heme molecules to molecular oxygen, producing superoxide through an outer-sphere reaction. Activation of the NADPH oxidase complex is initiated by the assembly of cytosolic subunits of the NADPH oxidase complex with the core NADPH oxidase complex to form a complex at the plasma membrane or phagosomal membrane. This activation process is initiated by phosphorylation dependent binding of the cytosolic NCF1/p47-phox subunit to the C-terminus of CYBA/p22-phox. This Bos taurus (Bovine) protein is Neutrophil cytosol factor 1.